The sequence spans 106 residues: MPPSTELDALVDKIVNDHSLSEPGQSLKELGDNGKYIMDVQMKKLLKLHDQSFIERCFTPMEELKNRYAKVKERSGDLQKEAELVDRDIRIIEMAIQDINKNKSHQ.

This sequence belongs to the BLOC1S1 family. In terms of assembly, component of the biogenesis of lysosome-related organelles complex-1 (BLOC-1).

The protein resides in the endosome. Functionally, component of the biogenesis of lysosome-related organelles complex-1 (BLOC-1), a complex involved in endosomal cargo sorting. This Candida glabrata (strain ATCC 2001 / BCRC 20586 / JCM 3761 / NBRC 0622 / NRRL Y-65 / CBS 138) (Yeast) protein is Biogenesis of lysosome-related organelles complex 1 subunit BLS1 (BLS1).